Here is a 263-residue protein sequence, read N- to C-terminus: Small ribosomal subunit protein uS2 (263 aa).

The tract at residues 228-263 is disordered; sequence QLEEPEADLADEDDNGMTTSDDGDAEALDIPDDSDA. Acidic residues predominate over residues 230–263; that stretch reads EEPEADLADEDDNGMTTSDDGDAEALDIPDDSDA.

It belongs to the universal ribosomal protein uS2 family.

The polypeptide is Small ribosomal subunit protein uS2 (Thermosynechococcus vestitus (strain NIES-2133 / IAM M-273 / BP-1)).